A 25-amino-acid polypeptide reads, in one-letter code: Glutamine synthetase 2 isozyme (25 aa).

The protein belongs to the glutamine synthetase family. As to quaternary structure, homohexamer.

It localises to the plastid. It is found in the chloroplast. It catalyses the reaction L-glutamate + NH4(+) + ATP = L-glutamine + ADP + phosphate + H(+). Its function is as follows. Plays a key role in the nitrogen metabolism of microorganisms, animals and plants. The chain is Glutamine synthetase 2 isozyme from Emiliania huxleyi (Coccolithophore).